The following is a 442-amino-acid chain: tRNA modification GTPase MnmE (442 aa).

(6S)-5-formyl-5,6,7,8-tetrahydrofolate is bound by residues Arg-21, Glu-79, and Lys-118. One can recognise a TrmE-type G domain in the interval 215 to 365 (GLKIAIVGKP…LENKLSSYCN (151 aa)). Residues 225-230 (NVGKSS), 244-250 (TNEAGTT), and 269-272 (DTAG) each bind GTP. Ser-229 and Thr-250 together coordinate Mg(2+). Lys-442 is a binding site for (6S)-5-formyl-5,6,7,8-tetrahydrofolate.

It belongs to the TRAFAC class TrmE-Era-EngA-EngB-Septin-like GTPase superfamily. TrmE GTPase family. Homodimer. Heterotetramer of two MnmE and two MnmG subunits. Requires K(+) as cofactor.

It localises to the cytoplasm. Exhibits a very high intrinsic GTPase hydrolysis rate. Involved in the addition of a carboxymethylaminomethyl (cmnm) group at the wobble position (U34) of certain tRNAs, forming tRNA-cmnm(5)s(2)U34. In Mycoplasma mobile (strain ATCC 43663 / 163K / NCTC 11711) (Mesomycoplasma mobile), this protein is tRNA modification GTPase MnmE.